The following is a 551-amino-acid chain: Frizzled-2 (551 aa).

The signal sequence occupies residues 1-26 (MQGVTRASILLIIYHLFTLSLGQLHG). Over 27–231 (EKGISVPEHG…FSQDEIRFAR (205 aa)) the chain is Extracellular. In terms of domain architecture, FZ spans 33–152 (PEHGFCQPIS…HGAEQICVGQ (120 aa)). 5 cysteine pairs are disulfide-bonded: cysteine 38/cysteine 99, cysteine 46/cysteine 92, cysteine 83/cysteine 120, cysteine 109/cysteine 149, and cysteine 113/cysteine 137. A glycan (N-linked (GlcNAc...) asparagine) is linked at asparagine 52. An N-linked (GlcNAc...) asparagine glycan is attached at asparagine 153. The chain crosses the membrane as a helical span at residues 232–252 (IWILIWSVLCCASTFITVTTY). At 253 to 265 (LVDMQRFRYPERP) the chain is on the cytoplasmic side. The chain crosses the membrane as a helical span at residues 266–286 (IIFLSGCYTMVSVAYIAGFVL). Residues 287-313 (GDKVVCNEGFSEDGYKTVVQGTKKEGC) are Extracellular-facing. The helical transmembrane segment at 314–334 (TILFMMLYFFSMASSIWWVIL) threads the bilayer. Over 335–356 (SLTWFLAAGMKWGHEAIEANSQ) the chain is Cytoplasmic. The chain crosses the membrane as a helical span at residues 357 to 377 (YFHLAAWAVPAVKTITILAMG). At 378–400 (QIDGDLLSGVCFVGLNNIDPLRG) the chain is on the extracellular side. The helical transmembrane segment at 401–421 (FVLAPLFVYLFIGTSFLLAGF) threads the bilayer. Over 422–447 (VSLFRIRTIMKHDGTKTEKLERLMVR) the chain is Cytoplasmic. A helical membrane pass occupies residues 448–468 (IGVFSVLYTVPATIVIACYFY). Over 469 to 505 (EQAFREHWERSWVSQNCKSLAIPCPLQYTPRMTPDFT) the chain is Extracellular. A helical transmembrane segment spans residues 506-526 (VYMIKYLMTLIVGITSGFWIW). The Cytoplasmic portion of the chain corresponds to 527 to 534 (SGKTLHSW). A Lys-Thr-X-X-X-Trp motif, mediates interaction with the PDZ domain of Dvl family members motif is present at residues 529–534 (KTLHSW). The short motif at 549 to 551 (TTV) is the PDZ-binding element.

This sequence belongs to the G-protein coupled receptor Fz/Smo family. Widely expressed, especially in the eye anlage, otic vesicle and developing somites.

The protein resides in the membrane. Its subcellular location is the cell membrane. Its function is as follows. Receptor for Wnt proteins. Most of frizzled receptors are coupled to the beta-catenin canonical signaling pathway, which leads to the activation of disheveled proteins, inhibition of GSK-3 kinase, nuclear accumulation of beta-catenin and activation of Wnt target genes. A second signaling pathway involving PKC and calcium fluxes has been seen for some family members, but it is not yet clear if it represents a distinct pathway or if it can be integrated in the canonical pathway, as PKC seems to be required for Wnt-mediated inactivation of GSK-3 kinase. Both pathways seem to involve interactions with G-proteins. May be involved in transduction and intercellular transmission of polarity information during tissue morphogenesis and/or in differentiated tissues. The polypeptide is Frizzled-2 (fzd2) (Xenopus laevis (African clawed frog)).